The chain runs to 1038 residues: Bone morphogenetic protein receptor type-2 (1038 aa).

An N-terminal signal peptide occupies residues 1 to 26 (MTSSLQRPWRVPWLPWTILLVSTAAA). Topologically, residues 27–150 (SQNQERLCAF…PPHSFNRDET (124 aa)) are extracellular. Cystine bridges form between C34–C66, C60–C84, C94–C117, C99–C116, and C118–C123. N55 carries an N-linked (GlcNAc...) asparagine glycan. N110 is a glycosylation site (N-linked (GlcNAc...) asparagine). An N-linked (GlcNAc...) asparagine glycan is attached at N126. Residues 151–171 (IIIALASVSVLAVLIVALCFG) form a helical membrane-spanning segment. Residues 172 to 1038 (YRMLTGDRKQ…VSKDIGMNCL (867 aa)) are Cytoplasmic-facing. Residues 203–504 (LKLLELIGRG…QCAEERMAEL (302 aa)) enclose the Protein kinase domain. ATP-binding positions include 209–217 (IGRGRYGAV), K230, and 280–282 (EYY). D333 (proton acceptor) is an active-site residue. Residues 337-338 (RN) and D351 contribute to the ATP site. T379 is subject to Phosphothreonine. Phosphoserine is present on S586. The disordered stretch occupies residues 593 to 626 (QAQARIPSPETSVTSLSTNTTTTNTTGLTPSTGM). Residues 603-626 (TSVTSLSTNTTTTNTTGLTPSTGM) are compositionally biased toward low complexity. Residues S680 and S681 each carry the phosphoserine modification. 2 disordered regions span residues 746–770 (PKQQ…KEPR) and 872–972 (RREQ…EKIK). Over residues 872 to 896 (RREQQAGHDEGVLDRLVDRRERPLE) the composition is skewed to basic and acidic residues. The span at 937–964 (RPNSLDLSATNVLDGSSIQIGESTQDGK) shows a compositional bias: polar residues.

This sequence belongs to the protein kinase superfamily. TKL Ser/Thr protein kinase family. TGFB receptor subfamily. In terms of assembly, interacts with GDF5. Interacts with BMP4. Interacts with SCUBE3. Interacts with TSC22D1/TSC-22. Interacts with activin A/INHBA. Requires Mg(2+) as cofactor. Mn(2+) serves as cofactor. In terms of tissue distribution, highly expressed in heart and liver.

Its subcellular location is the cell membrane. It carries out the reaction L-threonyl-[receptor-protein] + ATP = O-phospho-L-threonyl-[receptor-protein] + ADP + H(+). It catalyses the reaction L-seryl-[receptor-protein] + ATP = O-phospho-L-seryl-[receptor-protein] + ADP + H(+). Functionally, on ligand binding, forms a receptor complex consisting of two type II and two type I transmembrane serine/threonine kinases. Type II receptors phosphorylate and activate type I receptors which autophosphorylate, then bind and activate SMAD transcriptional regulators. Can also mediate signaling through the activation of the p38MAPK cascade. Binds to BMP7, BMP2 and, less efficiently, BMP4. Binding is weak but enhanced by the presence of type I receptors for BMPs. Mediates induction of adipogenesis by GDF6. Promotes signaling also by binding to activin A/INHBA. In Homo sapiens (Human), this protein is Bone morphogenetic protein receptor type-2 (BMPR2).